A 191-amino-acid chain; its full sequence is Protein hugin (191 aa).

A signal peptide spans 1–24 (MCGPSYCTLLLIAASCYILVCSHA). Residues 25 to 119 (KSLQGTSKLD…LTYYLLLQKL (95 aa)) constitute a propeptide that is removed on maturation. A leucine amide mark is found at Leu-137 and Leu-181. A propeptide spanning residues 185-191 (AQVCGGD) is cleaved from the precursor.

This sequence belongs to the pyrokinin family. As to expression, expressed in a subgroup of neurosecretory cells in the subesophageal ganglion from embryonic stage 9 to larval stages.

It is found in the secreted. Probably has a role in larval molting. The polypeptide is Protein hugin (Hug) (Drosophila melanogaster (Fruit fly)).